The chain runs to 207 residues: Small ribosomal subunit protein uS7y (207 aa).

A2 bears the N-acetylalanine mark.

The protein belongs to the universal ribosomal protein uS7 family. As to expression, expressed in root tips, lateral root primordia, leaf primordia, shoot apical meristem and vasculature of cotyledons.

The polypeptide is Small ribosomal subunit protein uS7y (Arabidopsis thaliana (Mouse-ear cress)).